The following is a 215-amino-acid chain: Peroxiredoxin (215 aa).

One can recognise a Thioredoxin domain in the interval 6 to 161; sequence PLIGEEFPRV…ILRAVKALQT (156 aa). Cysteine 48 acts as the Cysteine sulfenic acid (-SOH) intermediate in catalysis. Position 124 (arginine 124) interacts with substrate. Cysteines 205 and 211 form a disulfide.

The protein belongs to the peroxiredoxin family. Prx6 subfamily. Homodecamer. Pentamer of dimers that assemble into a ring structure.

Its subcellular location is the cytoplasm. It carries out the reaction a hydroperoxide + [thioredoxin]-dithiol = an alcohol + [thioredoxin]-disulfide + H2O. Functionally, thiol-specific peroxidase that catalyzes the reduction of hydrogen peroxide and organic hydroperoxides to water and alcohols, respectively. Plays a role in cell protection against oxidative stress by detoxifying peroxides. This is Peroxiredoxin from Thermotoga maritima (strain ATCC 43589 / DSM 3109 / JCM 10099 / NBRC 100826 / MSB8).